A 202-amino-acid chain; its full sequence is Superoxide dismutase [Fe] (202 aa).

Fe cation-binding residues include His27, His82, Asp164, and His168.

Belongs to the iron/manganese superoxide dismutase family. As to quaternary structure, homodimer. It depends on Fe cation as a cofactor.

It catalyses the reaction 2 superoxide + 2 H(+) = H2O2 + O2. Its function is as follows. Destroys superoxide anion radicals which are normally produced within the cells and which are toxic to biological systems. This is Superoxide dismutase [Fe] (sodA) from Enterococcus faecalis (strain ATCC 700802 / V583).